Consider the following 312-residue polypeptide: Photosystem I assembly protein Ycf4 (312 aa).

3 consecutive transmembrane segments (helical) span residues 42 to 62 (WAFI…SSYF), 91 to 111 (IILF…GLFL), and 113 to 133 (FYLW…IYIY).

It belongs to the Ycf4 family.

The protein resides in the plastid. The protein localises to the chloroplast thylakoid membrane. Its function is as follows. Seems to be required for the assembly of the photosystem I complex. This is Photosystem I assembly protein Ycf4 from Pleurastrum terricola (Filamentous green alga).